Reading from the N-terminus, the 600-residue chain is Putative DNA 3'-5' helicase Rad25 (600 aa).

One can recognise a Helicase ATP-binding domain in the interval 253 to 402 (VDRFEDASAG…DIYTLVGRPI (150 aa)). 266–273 (GPPGSGKT) provides a ligand contact to ATP. The DEAH box signature appears at 356-359 (DEVH). The 144-residue stretch at 457–600 (EIEHLVDQHG…VTESDASHSP (144 aa)) folds into the Helicase C-terminal domain. The interval 569–600 (RGTEEEDHARSRMRHLSTKGVRVTESDASHSP) is disordered. Positions 590–600 (RVTESDASHSP) are enriched in basic and acidic residues.

It belongs to the helicase family. RAD25/XPB subfamily.

The enzyme catalyses Couples ATP hydrolysis with the unwinding of duplex DNA by translocating in the 3'-5' direction.. It catalyses the reaction ATP + H2O = ADP + phosphate + H(+). This is Putative DNA 3'-5' helicase Rad25 from Halobacterium salinarum (strain ATCC 700922 / JCM 11081 / NRC-1) (Halobacterium halobium).